We begin with the raw amino-acid sequence, 206 residues long: Endoribonuclease YbeY (206 aa).

The interval Met1 to His20 is disordered. Zn(2+) is bound by residues His168, His172, and His178.

Belongs to the endoribonuclease YbeY family. Zn(2+) is required as a cofactor.

The protein resides in the cytoplasm. Single strand-specific metallo-endoribonuclease involved in late-stage 70S ribosome quality control and in maturation of the 3' terminus of the 16S rRNA. This Psychrobacter arcticus (strain DSM 17307 / VKM B-2377 / 273-4) protein is Endoribonuclease YbeY.